Reading from the N-terminus, the 258-residue chain is Bidirectional sugar transporter SWEET9 (258 aa).

The Extracellular portion of the chain corresponds to 1–7 (MFLKVHE). Residues 8-28 (IAFLFGLLGNIVSFGVFLSPV) form a helical membrane-spanning segment. The MtN3/slv 1 domain maps to 10–96 (FLFGLLGNIV…FLYILYAPRE (87 aa)). The Cytoplasmic portion of the chain corresponds to 29–42 (PTFYGIYKKKSSKG). A helical transmembrane segment spans residues 43-63 (FQSIPYICALASATLLLYYGI). At 64-69 (MKTHAY) the chain is on the extracellular side. Residues 70 to 90 (LIISINTFGCFIEISYLFLYI) form a helical membrane-spanning segment. Topologically, residues 91–103 (LYAPREAKISTLK) are cytoplasmic. Residues 104-124 (LIVICNIGGLGLLILLVNLLV) traverse the membrane as a helical segment. Over 125–131 (PKQHRVS) the chain is Extracellular. Residues 132 to 152 (TVGWVCAAYSLAVFASPLSVM) traverse the membrane as a helical segment. Positions 132–216 (TVGWVCAAYS…ILYMMYQGST (85 aa)) constitute a MtN3/slv 2 domain. Topologically, residues 153 to 165 (RKVIKTKSVEYMP) are cytoplasmic. A helical transmembrane segment spans residues 166–186 (FLLSLSLTLNAVMWFFYGLLI). The Extracellular segment spans residues 187–189 (KDK). Residues 190–210 (FIAMPNILGFLFGVAQMILYM) traverse the membrane as a helical segment. The Cytoplasmic portion of the chain corresponds to 211–258 (MYQGSTKTDLPTENQLANKTDVNEVPIVAVELPDVGSDNVEGSVRPMK).

This sequence belongs to the SWEET sugar transporter family. In terms of assembly, forms heterooligomers with SWEET1, SWEET5, SWEET8, SWEET11, SWEET13, SWEET16 and SWEET17. As to expression, specifically expressed in nectaries, mostly in the lower half of nectary parenchyma.

It localises to the cell membrane. The protein localises to the cytoplasmic vesicle membrane. Its subcellular location is the golgi apparatus. The protein resides in the trans-Golgi network membrane. Mediates both low-affinity uptake and efflux of sugar across the plasma membrane. Nectary-specific sugar transporter required for nectar production by mediating the secretion of sucrose from the nectary parenchyma to the extracellular space. The polypeptide is Bidirectional sugar transporter SWEET9 (Arabidopsis thaliana (Mouse-ear cress)).